The sequence spans 239 residues: tRNA (guanine-N(1)-)-methyltransferase (239 aa).

S-adenosyl-L-methionine-binding positions include glycine 113 and 133 to 138; that span reads IGDYVL. A disordered region spans residues 218–239; the sequence is ERRPDLWAARATQNPPERKTNG.

It belongs to the RNA methyltransferase TrmD family. As to quaternary structure, homodimer.

Its subcellular location is the cytoplasm. The enzyme catalyses guanosine(37) in tRNA + S-adenosyl-L-methionine = N(1)-methylguanosine(37) in tRNA + S-adenosyl-L-homocysteine + H(+). Its function is as follows. Specifically methylates guanosine-37 in various tRNAs. This Nitrobacter winogradskyi (strain ATCC 25391 / DSM 10237 / CIP 104748 / NCIMB 11846 / Nb-255) protein is tRNA (guanine-N(1)-)-methyltransferase.